The sequence spans 124 residues: UPF0375 protein Y45F10C.4 (124 aa).

Positions 1-23 (MNFLPSTVLLLSFVVAIISGSFS) are cleaved as a signal peptide. Residues asparagine 36 and asparagine 62 are each glycosylated (N-linked (GlcNAc...) asparagine).

The protein belongs to the UPF0375 family.

The protein resides in the secreted. The sequence is that of UPF0375 protein Y45F10C.4 from Caenorhabditis elegans.